Reading from the N-terminus, the 691-residue chain is DNA ligase (691 aa).

Residues Asp41 to Asp45, Ser90 to Leu91, and Glu130 contribute to the NAD(+) site. Catalysis depends on Lys132, which acts as the N6-AMP-lysine intermediate. Residues Arg153, Glu190, Lys307, and Lys331 each coordinate NAD(+). Zn(2+) contacts are provided by Cys425, Cys428, Cys443, and Cys449. Residues Ala610–Pro691 enclose the BRCT domain.

It belongs to the NAD-dependent DNA ligase family. LigA subfamily. The cofactor is Mg(2+). Requires Mn(2+) as cofactor.

It catalyses the reaction NAD(+) + (deoxyribonucleotide)n-3'-hydroxyl + 5'-phospho-(deoxyribonucleotide)m = (deoxyribonucleotide)n+m + AMP + beta-nicotinamide D-nucleotide.. Its function is as follows. DNA ligase that catalyzes the formation of phosphodiester linkages between 5'-phosphoryl and 3'-hydroxyl groups in double-stranded DNA using NAD as a coenzyme and as the energy source for the reaction. It is essential for DNA replication and repair of damaged DNA. The chain is DNA ligase from Burkholderia lata (strain ATCC 17760 / DSM 23089 / LMG 22485 / NCIMB 9086 / R18194 / 383).